We begin with the raw amino-acid sequence, 599 residues long: Elongation factor 4 (599 aa).

Positions 2-184 constitute a tr-type G domain; the sequence is KNIRNFSIIA…RLVRDIPPPQ (183 aa). Residues 14-19 and 131-134 contribute to the GTP site; these read DHGKST and NKID.

This sequence belongs to the TRAFAC class translation factor GTPase superfamily. Classic translation factor GTPase family. LepA subfamily.

It is found in the cell inner membrane. It catalyses the reaction GTP + H2O = GDP + phosphate + H(+). In terms of biological role, required for accurate and efficient protein synthesis under certain stress conditions. May act as a fidelity factor of the translation reaction, by catalyzing a one-codon backward translocation of tRNAs on improperly translocated ribosomes. Back-translocation proceeds from a post-translocation (POST) complex to a pre-translocation (PRE) complex, thus giving elongation factor G a second chance to translocate the tRNAs correctly. Binds to ribosomes in a GTP-dependent manner. The protein is Elongation factor 4 of Salmonella paratyphi C (strain RKS4594).